Reading from the N-terminus, the 484-residue chain is Poly(A) RNA polymerase GLD2 (484 aa).

Residues S62 and S69 each carry the phosphoserine modification. The interval 72–97 (FRGRKRLSDEKNLPLDGKRQRFHSPH) is disordered. The short motif at 76-92 (KRLSDEKNLPLDGKRQR) is the Nuclear localization signal element. A compositionally biased stretch (basic and acidic residues) spans 77 to 90 (RLSDEKNLPLDGKR). Residue S95 is modified to Phosphoserine. 2 residues coordinate Mg(2+): D213 and D215. The region spanning 386-440 (NLGDLLLGFLKYYATEFDWNSQMISVREAKAIPRPDGIEWRNKYICVEEPFDGTN) is the PAP-associated domain.

It belongs to the DNA polymerase type-B-like family. GLD2 subfamily. As to quaternary structure, interacts with CPEB1, CPEB2, CPSF1 and PABPC1. Interacts with QKI isoform QKI7; promoting recruitment to miRNA miR-122 and miR-122 stabilization. The cofactor is Mg(2+). It depends on Mn(2+) as a cofactor. In terms of tissue distribution, expressed in brain. Within brain, it is expressed in cerebellum, hippocampus and medulla.

The protein resides in the cytoplasm. It localises to the nucleus. The catalysed reaction is RNA(n) + ATP = RNA(n)-3'-adenine ribonucleotide + diphosphate. Cytoplasmic poly(A) RNA polymerase that adds successive AMP monomers to the 3'-end of specific RNAs, forming a poly(A) tail. In contrast to the canonical nuclear poly(A) RNA polymerase, it only adds poly(A) to selected cytoplasmic mRNAs. Does not play a role in replication-dependent histone mRNA degradation. Adds a single nucleotide to the 3' end of specific miRNAs, monoadenylation stabilizes and prolongs the activity of some but not all miRNAs. The polypeptide is Poly(A) RNA polymerase GLD2 (Homo sapiens (Human)).